Reading from the N-terminus, the 146-residue chain is Metallothiol transferase FosB (146 aa).

The region spanning 4–120 (GINHMTFSVS…DGHLLEVHTG (117 aa)) is the VOC domain. Mg(2+) contacts are provided by His7, His66, and Glu116. Glu116 serves as the catalytic Proton donor/acceptor.

The protein belongs to the fosfomycin resistance protein family. FosB subfamily. Homodimer. It depends on Mg(2+) as a cofactor.

It is found in the cytoplasm. Its function is as follows. Metallothiol transferase which confers resistance to fosfomycin by catalyzing the addition of a thiol cofactor to fosfomycin. L-cysteine is probably the physiological thiol donor. The protein is Metallothiol transferase FosB of Shouchella clausii (strain KSM-K16) (Alkalihalobacillus clausii).